The following is a 150-amino-acid chain: Large ribosomal subunit protein bL9 (150 aa).

It belongs to the bacterial ribosomal protein bL9 family.

Functionally, binds to the 23S rRNA. This Neisseria meningitidis serogroup C (strain 053442) protein is Large ribosomal subunit protein bL9.